Here is a 497-residue protein sequence, read N- to C-terminus: NAD(P)H-quinone oxidoreductase chain 4, chloroplastic (497 aa).

The next 13 helical transmembrane spans lie at 4-24 (LPWL…IPLF), 35-55 (YTLG…CCHF), 87-107 (MGLI…AWPV), 113-133 (LFHF…ASQD), 134-154 (ILLF…LLSI), 167-187 (FILY…TIGL), 207-227 (IALE…KLPI), 242-262 (HYST…YGLI), 274-294 (AIFA…ASLI), 313-333 (MGFV…GAIL), 386-406 (LALP…GIVI), 416-436 (IVIT…LLSM), and 462-482 (IFIS…PNLV).

The protein belongs to the complex I subunit 4 family.

It localises to the plastid. It is found in the chloroplast thylakoid membrane. It carries out the reaction a plastoquinone + NADH + (n+1) H(+)(in) = a plastoquinol + NAD(+) + n H(+)(out). It catalyses the reaction a plastoquinone + NADPH + (n+1) H(+)(in) = a plastoquinol + NADP(+) + n H(+)(out). This Angiopteris evecta (Mule's foot fern) protein is NAD(P)H-quinone oxidoreductase chain 4, chloroplastic.